A 383-amino-acid polypeptide reads, in one-letter code: MRNSVKWETELTGDRSRRREADESSETPKIVKKEKRSKTVIASLRPQQPPIQEEEEQGIADRRAIRSQYLALTHKIKDAKDDLTKIDSNKFNSIINEVENLHQKVRKPREQIADAEALLDLTNSVVSSVKSQSAHGGVSPAEFVNALINGFGKTSLRIDADENTQVSMKWKDLGFTVCSTVLVSCGCTTMMGPMYSEMKQRKSRVGNRKRTKPGAGVKPEEVDDTEAEKKSDTDNNMAVMFNILRKNKRVKIENLVLNRKSFAQTAENMFALSFLVKDGRVEITVDNNGSHFVEPRNAPAANLVLSGEVAYNHFVLRFDYKDWEPMSKMVAVGEELMPLRETKVAQDSIELSRKQGSVIQEETVVEDSSNMEGDNEDSKNGGL.

Residues methionine 1–aspartate 22 show a composition bias toward basic and acidic residues. 3 disordered regions span residues methionine 1 to isoleucine 59, methionine 198 to serine 231, and glutamine 355 to leucine 383. Over residues arginine 201–lysine 212 the composition is skewed to basic residues. Positions glutamine 355 to glutamate 372 are enriched in polar residues.

The protein belongs to the NSE4 family. As to quaternary structure, interacts with SMC5, SMC6A or SMC6B. The SMC5-SMC6 complex is composed of the SMC5 and SMC6 heterodimer attached via their hinge domain and from the non-SMC subunit NSE4A or NSE4B. In terms of tissue distribution, not expressed in seedlings, rosette leaves and floral buds.

It localises to the nucleus. In terms of biological role, component of the SMC5-SMC6 complex, that promotes sister chromatid alignment after DNA damage and facilitates double-stranded DNA breaks (DSBs) repair via homologous recombination between sister chromatids. This chain is Non-structural maintenance of chromosomes element 4 homolog B (NSE4B), found in Arabidopsis thaliana (Mouse-ear cress).